The chain runs to 789 residues: Cadherin-10 (789 aa).

Residues 1 to 22 form the signal peptide; it reads MTIQQVLLLLLLWMWLLHPCRT. Residues 23-54 constitute a propeptide that is removed on maturation; sequence EMLFRRTPDLRPKGFVGRTSGSDGKALHRQKR. 5 Cadherin domains span residues 55 to 160, 161 to 269, 270 to 384, 385 to 487, and 488 to 606; these read GWMW…EPTF, PEEI…PPRF, PQST…PPVF, SRSS…DNAP, and QFAV…LLLP. At 55-606 the chain is on the extracellular side; that stretch reads GWMWNQFFLL…SCNAEALLLP (552 aa). Asn256 is a glycosylation site (N-linked (GlcNAc...) asparagine). N-linked (GlcNAc...) asparagine glycosylation is found at Asn438, Asn456, and Asn534. The chain crosses the membrane as a helical span at residues 607-634; it reads AGLSTGALIAILLCIIILLVIVVLFAAL. At 635–789 the chain is on the cytoplasmic side; it reads KRQRKKEPLI…GGGESDKDAS (155 aa).

It localises to the cell membrane. Cadherins are calcium-dependent cell adhesion proteins. They preferentially interact with themselves in a homophilic manner in connecting cells; cadherins may thus contribute to the sorting of heterogeneous cell types. This Gallus gallus (Chicken) protein is Cadherin-10 (CDH10).